The sequence spans 101 residues: Trp operon repressor homolog (101 aa).

Residues 59-82 (QREIQQNLNTSAATITRGSNMLKL) mediate DNA binding.

It belongs to the TrpR family. As to quaternary structure, homodimer.

Its subcellular location is the cytoplasm. This protein is an aporepressor. When complexed with L-tryptophan it binds the operator region of the trp operon and prevents the initiation of transcription. This chain is Trp operon repressor homolog, found in Mannheimia succiniciproducens (strain KCTC 0769BP / MBEL55E).